The chain runs to 647 residues: Pumilio homolog 3 (647 aa).

Over residues 1-10 (MEVKGKKKFT) the composition is skewed to basic residues. The tract at residues 1-123 (MEVKGKKKFT…KKKKELKQSR (123 aa)) is disordered. The residue at position 33 (Lys33) is an N6-acetyllysine. A compositionally biased stretch (basic residues) spans 59–68 (PGKKGVKQFK). Positions 102–123 (SGAKKPKWDDFKKKKKELKQSR) are enriched in basic and acidic residues. Residues 105 to 117 (KKPKWDDFKKKKK) carry the Nuclear localization signal motif. Positions 142-509 (ESLRRKDCDK…VVLDKSACVL (368 aa)) constitute a PUM-HD domain. Pumilio repeat units lie at residues 176-211 (HDST…LSKA), 212-247 (KYSR…MLRH), 248-276 (SEAS…ELYG), 288-324 (PTLD…VIKH), 325-360 (SLVH…LAHT), 361-396 (HDGA…VANG), 397-434 (QYSH…IVND), 435-503 (KYGR…VVLD), 504-550 (KSAC…VAEH), 551-595 (PAGH…WASI), and 596-635 (NRGA…KSSS).

As to quaternary structure, interacts with PARP1 (via catalytic domain). As to expression, in the adult eye, expressed primarily in retinal ganglion cells and, to a lesser extent, in the pigmented cells.

The protein resides in the nucleus. It localises to the nucleolus. The protein localises to the nucleoplasm. It is found in the chromosome. Inhibits the poly(ADP-ribosyl)ation activity of PARP1 and the degradation of PARP1 by CASP3 following genotoxic stress. Binds to double-stranded RNA or DNA without sequence specificity. Involved in development of the eye and of primordial germ cells. The protein is Pumilio homolog 3 of Mus musculus (Mouse).